Here is a 395-residue protein sequence, read N- to C-terminus: Putative 8-amino-7-oxononanoate synthase (395 aa).

R23 lines the substrate pocket. 110-111 (GF) is a pyridoxal 5'-phosphate binding site. Residue H135 participates in substrate binding. Pyridoxal 5'-phosphate-binding positions include S182, 207–210 (DEAH), and 239–242 (TFSK). N6-(pyridoxal phosphate)lysine is present on K242. Residue T356 coordinates substrate.

This sequence belongs to the class-II pyridoxal-phosphate-dependent aminotransferase family. BioF subfamily. Homodimer. The cofactor is pyridoxal 5'-phosphate.

The catalysed reaction is 6-carboxyhexanoyl-[ACP] + L-alanine + H(+) = (8S)-8-amino-7-oxononanoate + holo-[ACP] + CO2. The protein operates within cofactor biosynthesis; biotin biosynthesis. Functionally, catalyzes the decarboxylative condensation of pimeloyl-[acyl-carrier protein] and L-alanine to produce 8-amino-7-oxononanoate (AON), [acyl-carrier protein], and carbon dioxide. This Bacillus thuringiensis subsp. konkukian (strain 97-27) protein is Putative 8-amino-7-oxononanoate synthase (bioF).